Here is a 551-residue protein sequence, read N- to C-terminus: Cilia- and flagella-associated protein 45 (551 aa).

Disordered regions lie at residues 1–30 (MPLS…TKAV) and 461–489 (RLEE…QQKE). Residues 157 to 526 (NNNKKLSDLE…IKRKKLEELR (370 aa)) adopt a coiled-coil conformation.

The protein belongs to the CFAP45 family. As to quaternary structure, microtubule inner protein component of sperm flagellar doublet microtubules. Interacts with AK8; dimerization with AK8 may create a cavity at the interface of the dimer that can accommodate AMP. Interacts with CFAP52. Interacts with ENKUR. Directly interacts with DNALI1. Interacts with DNAH11. Interacts with DNAI1. Expressed in respiratory cells and in sperm (at protein level). Expressed in nasopharyngeal epithelium and trachea.

It localises to the cytoplasm. The protein resides in the cytoskeleton. The protein localises to the cilium axoneme. It is found in the flagellum axoneme. Its subcellular location is the cell projection. It localises to the cilium. The protein resides in the flagellum. Microtubule inner protein (MIP) part of the dynein-decorated doublet microtubules (DMTs) in cilia axoneme, which is required for motile cilia beating. It is an AMP-binding protein that may facilitate dynein ATPase-dependent ciliary and flagellar beating via adenine nucleotide homeostasis. May function as a donor of AMP to AK8 and hence promote ADP production. The polypeptide is Cilia- and flagella-associated protein 45 (Homo sapiens (Human)).